The primary structure comprises 61 residues: Photosystem II reaction center protein K (61 aa).

A propeptide spanning residues 1–24 (MLNTFSLIGICLNSTLYSSSFFFG) is cleaved from the precursor. The chain crosses the membrane as a helical span at residues 36 to 56 (IVDIMPVIPLFFFLLAFVWQA).

It belongs to the PsbK family. PSII is composed of 1 copy each of membrane proteins PsbA, PsbB, PsbC, PsbD, PsbE, PsbF, PsbH, PsbI, PsbJ, PsbK, PsbL, PsbM, PsbT, PsbX, PsbY, PsbZ, Psb30/Ycf12, at least 3 peripheral proteins of the oxygen-evolving complex and a large number of cofactors. It forms dimeric complexes.

The protein localises to the plastid. The protein resides in the chloroplast thylakoid membrane. Functionally, one of the components of the core complex of photosystem II (PSII). PSII is a light-driven water:plastoquinone oxidoreductase that uses light energy to abstract electrons from H(2)O, generating O(2) and a proton gradient subsequently used for ATP formation. It consists of a core antenna complex that captures photons, and an electron transfer chain that converts photonic excitation into a charge separation. In Solanum bulbocastanum (Wild potato), this protein is Photosystem II reaction center protein K.